The following is a 145-amino-acid chain: Late embryogenesis abundant protein D-11 (145 aa).

Residues 1–18 (MAHFQNQYSAPEVTQTDA) are compositionally biased toward polar residues. Residues 1–136 (MAHFQNQYSA…EAPWSPQPLI (136 aa)) are disordered. The span at 47 to 57 (GHHHGGHHGLH) shows a compositional bias: basic residues. Residues 58-68 (RTGSSSSSSSS) show a composition bias toward low complexity. The segment covering 82-96 (KERLKEKIPGNKEHQ) has biased composition (basic and acidic residues). Residues 97–107 (SQATSTTTPGQ) show a composition bias toward polar residues.

Belongs to the plant dehydrin family.

Functionally, LEA protein are late embryogenesis abundant in higher plant seed embryos. There are two subsets of LEA proteins (5a, and 5b), the first ones are expressed when the cotyledon weight reach 80 mg and the second set are expressed above 100 mg. The function of those proteins is not known. The chain is Late embryogenesis abundant protein D-11 from Gossypium hirsutum (Upland cotton).